The sequence spans 122 residues: Large ribosomal subunit protein uL14 (122 aa).

The protein belongs to the universal ribosomal protein uL14 family. As to quaternary structure, part of the 50S ribosomal subunit. Forms a cluster with proteins L3 and L19. In the 70S ribosome, L14 and L19 interact and together make contacts with the 16S rRNA in bridges B5 and B8.

In terms of biological role, binds to 23S rRNA. Forms part of two intersubunit bridges in the 70S ribosome. The sequence is that of Large ribosomal subunit protein uL14 from Rhodopirellula baltica (strain DSM 10527 / NCIMB 13988 / SH1).